Consider the following 439-residue polypeptide: Nuclear distribution protein PAC1 (439 aa).

Residues 55–90 (NSIVRLQSKIMELEKNCEELQKSIDEQQSSTNQISN) adopt a coiled-coil conformation. WD repeat units lie at residues 106–145 (TLDA…LPLQ), 149–193 (AHMD…TLSH), 199–240 (GHEH…CIKS), 243–282 (PHTQ…SMGI), 295–335 (IPDP…FIPH), 355–392 (DHNS…LSTT), and 402–438 (NKGF…TSFM).

This sequence belongs to the WD repeat LIS1/nudF family. Self-associates. Interacts with NDL1 and dynein.

The protein localises to the cytoplasm. The protein resides in the cytoskeleton. It is found in the spindle pole. In terms of biological role, positively regulates the activity of the minus-end directed microtubule motor protein dynein. Plays a central role in positioning the mitotic spindle at the bud neck during cell division. Targets cytoplasmic dynein to microtubule plus ends, thereby promoting dynein-mediated microtubule sliding along the bud cortex and consequently the movement of the mitotic spindle to the bud neck. This chain is Nuclear distribution protein PAC1, found in Kluyveromyces lactis (strain ATCC 8585 / CBS 2359 / DSM 70799 / NBRC 1267 / NRRL Y-1140 / WM37) (Yeast).